The primary structure comprises 289 residues: 18S rRNA (guanine-N(7))-methyltransferase RID2 (289 aa).

Residues 215–289 (KNEYDESCSE…FTSRKRRTRF (75 aa)) form a disordered region. Over residues 219 to 237 (DESCSEDDNSDDEESEEVG) the composition is skewed to acidic residues. The segment covering 243 to 254 (RPRKRQRTNTKV) has biased composition (basic residues). Residues 255-264 (KGREWVLRKK) are compositionally biased toward basic and acidic residues. The Nuclear localization signal signature appears at 268–275 (RRKGKNVP).

The protein belongs to the class I-like SAM-binding methyltransferase superfamily. BUD23/WBSCR22 family. Expressed in seedlings, roots and flowers.

It localises to the nucleus. Its subcellular location is the nucleoplasm. It is found in the cytoplasm. The protein localises to the perinuclear region. The protein resides in the nucleolus. It carries out the reaction guanosine(1575) in yeast 18S rRNA + S-adenosyl-L-methionine = N(7)-methylguanosine(1575) in yeast 18S rRNA + S-adenosyl-L-homocysteine. In terms of biological role, essential protein. S-adenosyl-L-methionine-dependent methyltransferase that specifically methylates the N(7) position of a guanine in 18S rRNA. Requires the methyltransferase adapter protein TRM112 for full rRNA methyltransferase activity. Important for biogenesis end export of the 40S ribosomal subunit independent on its methyltransferase activity. Involved in the pre-rRNA processing steps in the nucleolus leading to small-subunit rRNA production independently of its RNA-modifying catalytic activity. Supports cell proliferation. Required for the initiation of lateral root primordia formation and for the root apical meristem (RAM) organization as well as for leaves development. During callus formation from hypocotyl and root explants, required for the initial stage of reactivation of cell proliferation in the hypocotyl stele. Involved in leaf polarity establishment by functioning cooperatively with AS2 to repress abaxial genes ARF3, ARF4, KAN1, KAN2, YAB1 and YAB5, and the knox homeobox genes KNAT1, KNAT2, KNAT6, and STM to promote adaxial development in leaf primordia at shoot apical meristems at high temperatures. This is 18S rRNA (guanine-N(7))-methyltransferase RID2 from Arabidopsis thaliana (Mouse-ear cress).